Here is a 273-residue protein sequence, read N- to C-terminus: Large ribosomal subunit protein uL2 (273 aa).

Disordered regions lie at residues 28–55 (TPEKSLTRGKPAKAGRGAGGRISVRHRG) and 222–273 (GMAM…SKRK). Over residues 255–273 (YKTRKKRRVSDRFIVSKRK) the composition is skewed to basic residues.

It belongs to the universal ribosomal protein uL2 family. Part of the 50S ribosomal subunit. Forms a bridge to the 30S subunit in the 70S ribosome.

In terms of biological role, one of the primary rRNA binding proteins. Required for association of the 30S and 50S subunits to form the 70S ribosome, for tRNA binding and peptide bond formation. It has been suggested to have peptidyltransferase activity; this is somewhat controversial. Makes several contacts with the 16S rRNA in the 70S ribosome. The sequence is that of Large ribosomal subunit protein uL2 from Treponema pallidum (strain Nichols).